Reading from the N-terminus, the 410-residue chain is Transcription factor rglT (410 aa).

The interval 1–24 (MQFDSLPLPPSSSHDTTSVPPLKR) is disordered. The zn(2)-C6 fungal-type DNA-binding region spans 28 to 55 (CDECRKRKLKCSGEATGCSRCLKQSLPC). The disordered stretch occupies residues 353–372 (HRTRTVESPNEPGSCSPVSH). Over residues 358-369 (VESPNEPGSCSP) the composition is skewed to polar residues.

The protein resides in the nucleus. Functionally, transcription factor that is involved in protection against oxidative stress. Binds to promoter regions of the gliotoxin (GT) biosynthetic genes gliZ, gliF, gliT, gliM, gliA and gtmA. Two related but different DNA motifs (5'-TCGG-3' and 5'-CGGNCGG-3') are specifically enriched among rglT binding sites in GT-inducing conditions. Also indirectly regulates the expression of gliP, gliG, gliH and gliN. Plays a key role in resistance against exogenously-added GT and GT biosynthesis, mainly through the direct regulation of gliT. Furthermore, rglT is important for virulence in chemotherapeutic mice with invasive pulmonary aspergillosis (IPA). This is Transcription factor rglT from Aspergillus fumigatus (strain CBS 144.89 / FGSC A1163 / CEA10) (Neosartorya fumigata).